A 147-amino-acid polypeptide reads, in one-letter code: Hemoglobin subunit beta (147 aa).

An N-acetylvaline modification is found at Val2. Residues 3-147 enclose the Globin domain; it reads HMSAEEKGIV…VAAALAHKYH (145 aa). Thr13 is subject to Phosphothreonine. Ser45 bears the Phosphoserine mark. At Lys60 the chain carries N6-acetyllysine. His64 contacts heme b. Lys83 is modified (N6-acetyllysine). Residue His93 participates in heme b binding. Cys94 carries the S-nitrosocysteine modification. Lys145 is modified (N6-acetyllysine).

It belongs to the globin family. In terms of assembly, heterotetramer of two alpha chains and two beta chains. As to expression, red blood cells.

In terms of biological role, involved in oxygen transport from the lung to the various peripheral tissues. This is Hemoglobin subunit beta (HBB) from Scalopus aquaticus (Eastern mole).